The following is a 347-amino-acid chain: Fc receptor-like A (347 aa).

A signal peptide spans 1–27 (MKLSCMLIEWALYVCPAVLLATQMSLA). Ig-like C2-type domains are found at residues 77–166 (PFHL…ETAS) and 179–257 (PVLK…RQIS). Disulfide bonds link Cys-106–Cys-150 and Cys-199–Cys-247. The disordered stretch occupies residues 272–296 (KPATPETPPPAKAPGPLPLLPTPSD). Positions 276–292 (PETPPPAKAPGPLPLLP) are enriched in pro residues.

In terms of assembly, monomer or homodimer; disulfide-linked.

It localises to the cytoplasm. Functionally, may be implicated in B-cell differentiation and lymphomagenesis. In Rattus norvegicus (Rat), this protein is Fc receptor-like A (Fcrla).